Reading from the N-terminus, the 212-residue chain is NAD(P)H-hydrate epimerase (212 aa).

Positions 10–212 (MRSLERAAIA…IGVIVKPIGL (203 aa)) constitute a YjeF N-terminal domain. Position 65–69 (65–69 (NNGGD)) interacts with (6S)-NADPHX. Residues Asn66 and Asp129 each coordinate K(+). Residues 133 to 139 (GLGLTRP) and Asp161 each bind (6S)-NADPHX. Ser164 is a binding site for K(+).

The protein belongs to the NnrE/AIBP family. Requires K(+) as cofactor.

The enzyme catalyses (6R)-NADHX = (6S)-NADHX. The catalysed reaction is (6R)-NADPHX = (6S)-NADPHX. Its function is as follows. Catalyzes the epimerization of the S- and R-forms of NAD(P)HX, a damaged form of NAD(P)H that is a result of enzymatic or heat-dependent hydration. This is a prerequisite for the S-specific NAD(P)H-hydrate dehydratase to allow the repair of both epimers of NAD(P)HX. The protein is NAD(P)H-hydrate epimerase of Rhodobacter capsulatus (strain ATCC BAA-309 / NBRC 16581 / SB1003).